Here is a 360-residue protein sequence, read N- to C-terminus: Protein Wnt-2 (360 aa).

Positions 1-25 (MNAPLGGIWLWLPLLLTWLTPEVSS) are cleaved as a signal peptide. Cystine bridges form between Cys76–Cys87, Cys127–Cys135, Cys137–Cys157, Cys206–Cys220, Cys208–Cys215, Cys278–Cys309, Cys294–Cys304, Cys308–Cys348, Cys324–Cys339, Cys326–Cys336, and Cys331–Cys332. Ser212 carries the O-palmitoleoyl serine; by PORCN lipid modification. N-linked (GlcNAc...) asparagine glycosylation occurs at Asn295.

It belongs to the Wnt family. In terms of processing, palmitoleoylation is required for efficient binding to frizzled receptors. Depalmitoleoylation leads to Wnt signaling pathway inhibition.

It localises to the secreted. Its subcellular location is the extracellular space. The protein resides in the extracellular matrix. Functionally, ligand for members of the frizzled family of seven transmembrane receptors. Functions in the canonical Wnt signaling pathway that results in activation of transcription factors of the TCF/LEF family. Functions as a upstream regulator of FGF10 expression. Plays an important role in embryonic lung development. May contribute to embryonic brain development by regulating the proliferation of dopaminergic precursors and neurons. The protein is Protein Wnt-2 (WNT2) of Equus caballus (Horse).